The chain runs to 189 residues: Chitin synthase 1 (189 aa).

The protein belongs to the chitin synthase family.

The protein localises to the cell membrane. It catalyses the reaction [(1-&gt;4)-N-acetyl-beta-D-glucosaminyl](n) + UDP-N-acetyl-alpha-D-glucosamine = [(1-&gt;4)-N-acetyl-beta-D-glucosaminyl](n+1) + UDP + H(+). In terms of biological role, polymerizes chitin, a structural polymer of the cell wall and septum, by transferring the sugar moiety of UDP-GlcNAc to the non-reducing end of the growing chitin polymer. The sequence is that of Chitin synthase 1 (CHS1) from Exophiala exophialae (Black yeast-like fungus).